The chain runs to 137 residues: MTLTVRVIAPDKTIWDKEAQEVILPSTTGQLGILGGHAPLLTALDTGVMRVRAENDWIAIALMGGFAEIEADEVSILVNGAERGDNIDTEKARLAYEEAEKRLQTSESSDNLQEKIKAKQTLKRARARLQAAGGMVN.

The protein belongs to the ATPase epsilon chain family. In terms of assembly, F-type ATPases have 2 components, CF(1) - the catalytic core - and CF(0) - the membrane proton channel. CF(1) has five subunits: alpha(3), beta(3), gamma(1), delta(1), epsilon(1). CF(0) has three main subunits: a, b and c.

Its subcellular location is the cellular thylakoid membrane. Produces ATP from ADP in the presence of a proton gradient across the membrane. In Trichodesmium erythraeum (strain IMS101), this protein is ATP synthase epsilon chain.